Reading from the N-terminus, the 145-residue chain is Transcription antitermination protein NusB (145 aa).

This sequence belongs to the NusB family.

Its function is as follows. Involved in transcription antitermination. Required for transcription of ribosomal RNA (rRNA) genes. Binds specifically to the boxA antiterminator sequence of the ribosomal RNA (rrn) operons. This Burkholderia lata (strain ATCC 17760 / DSM 23089 / LMG 22485 / NCIMB 9086 / R18194 / 383) protein is Transcription antitermination protein NusB.